Reading from the N-terminus, the 75-residue chain is Cytochrome c oxidase subunit 6C (75 aa).

The Mitochondrial matrix segment spans residues 1-13 (MSSGALTKPQMRG). Residues 14–54 (LLAKRLRFHIVGAFAVSLGVAAFYKFAVAEPRKKAYADFYR) form a helical membrane-spanning segment. Residues 55–75 (NYDSMKDFEEMRKAGIFQSAK) are Mitochondrial intermembrane-facing.

It belongs to the cytochrome c oxidase subunit 6c family. As to quaternary structure, component of the cytochrome c oxidase (complex IV, CIV), a multisubunit enzyme composed of 14 subunits. The complex is composed of a catalytic core of 3 subunits MT-CO1, MT-CO2 and MT-CO3, encoded in the mitochondrial DNA, and 11 supernumerary subunits COX4I, COX5A, COX5B, COX6A, COX6B, COX6C, COX7A, COX7B, COX7C, COX8 and NDUFA4, which are encoded in the nuclear genome. The complex exists as a monomer or a dimer and forms supercomplexes (SCs) in the inner mitochondrial membrane with NADH-ubiquinone oxidoreductase (complex I, CI) and ubiquinol-cytochrome c oxidoreductase (cytochrome b-c1 complex, complex III, CIII), resulting in different assemblies (supercomplex SCI(1)III(2)IV(1) and megacomplex MCI(2)III(2)IV(2)).

The protein resides in the mitochondrion inner membrane. It functions in the pathway energy metabolism; oxidative phosphorylation. Component of the cytochrome c oxidase, the last enzyme in the mitochondrial electron transport chain which drives oxidative phosphorylation. The respiratory chain contains 3 multisubunit complexes succinate dehydrogenase (complex II, CII), ubiquinol-cytochrome c oxidoreductase (cytochrome b-c1 complex, complex III, CIII) and cytochrome c oxidase (complex IV, CIV), that cooperate to transfer electrons derived from NADH and succinate to molecular oxygen, creating an electrochemical gradient over the inner membrane that drives transmembrane transport and the ATP synthase. Cytochrome c oxidase is the component of the respiratory chain that catalyzes the reduction of oxygen to water. Electrons originating from reduced cytochrome c in the intermembrane space (IMS) are transferred via the dinuclear copper A center (CU(A)) of subunit 2 and heme A of subunit 1 to the active site in subunit 1, a binuclear center (BNC) formed by heme A3 and copper B (CU(B)). The BNC reduces molecular oxygen to 2 water molecules using 4 electrons from cytochrome c in the IMS and 4 protons from the mitochondrial matrix. The protein is Cytochrome c oxidase subunit 6C (COX6C) of Carlito syrichta (Philippine tarsier).